We begin with the raw amino-acid sequence, 116 residues long: Large ribosomal subunit protein bL19 (116 aa).

The protein belongs to the bacterial ribosomal protein bL19 family.

Functionally, this protein is located at the 30S-50S ribosomal subunit interface and may play a role in the structure and function of the aminoacyl-tRNA binding site. In Pseudomonas aeruginosa (strain LESB58), this protein is Large ribosomal subunit protein bL19.